The chain runs to 210 residues: ATP-dependent Clp protease proteolytic subunit (210 aa).

The active-site Nucleophile is the Ser106. His131 is a catalytic residue.

This sequence belongs to the peptidase S14 family. Fourteen ClpP subunits assemble into 2 heptameric rings which stack back to back to give a disk-like structure with a central cavity, resembling the structure of eukaryotic proteasomes.

It localises to the cytoplasm. The catalysed reaction is Hydrolysis of proteins to small peptides in the presence of ATP and magnesium. alpha-casein is the usual test substrate. In the absence of ATP, only oligopeptides shorter than five residues are hydrolyzed (such as succinyl-Leu-Tyr-|-NHMec, and Leu-Tyr-Leu-|-Tyr-Trp, in which cleavage of the -Tyr-|-Leu- and -Tyr-|-Trp bonds also occurs).. Functionally, cleaves peptides in various proteins in a process that requires ATP hydrolysis. Has a chymotrypsin-like activity. Plays a major role in the degradation of misfolded proteins. The sequence is that of ATP-dependent Clp protease proteolytic subunit from Bartonella henselae (strain ATCC 49882 / DSM 28221 / CCUG 30454 / Houston 1) (Rochalimaea henselae).